An 849-amino-acid polypeptide reads, in one-letter code: Dopamine receptor 2 (849 aa).

Topologically, residues Met1–Tyr39 are extracellular. A glycan (N-linked (GlcNAc...) asparagine) is linked at Asn8. Residues Ala40 to Ile60 traverse the membrane as a helical segment. Over Ser61–Ser70 the chain is Cytoplasmic. A helical membrane pass occupies residues Ala71 to Met91. Over Pro92–Asp112 the chain is Extracellular. Cysteines 111 and 190 form a disulfide. The helical transmembrane segment at Ile113–Ser133 threads the bilayer. Residues Phe134–Arg155 lie on the Cytoplasmic side of the membrane. A helical membrane pass occupies residues Val156–Phe176. Residues Gly177–Met203 are Extracellular-facing. The segment at Pro183 to Val849 is required for the interaction with gpa-14. Residues Ile204–Leu224 form a helical membrane-spanning segment. Residues Lys225–Thr759 lie on the Cytoplasmic side of the membrane. Positions Arg450–Asn515 are disordered. The span at Asp457–Gly470 shows a compositional bias: low complexity. Positions Gly477–Lys498 are enriched in basic residues. A compositionally biased stretch (polar residues) spans Arg501–Asn515. The helical transmembrane segment at Leu760 to Leu780 threads the bilayer. Residues Asn781–Leu798 lie on the Extracellular side of the membrane. Residues Phe799–Ile819 traverse the membrane as a helical segment. Over Phe820–Val849 the chain is Cytoplasmic.

Belongs to the G-protein coupled receptor 1 family. In terms of assembly, interacts (via C-terminus) with the G-alpha protein gpa-14; the interaction is direct. Expressed in all dopaminergic neurons. Expressed in neurons around the nerve ring and the posterior side of the body including PDE neurons. In hermaphrodites, expressed in the head and tail ganglia including in the RIA interneuron pair, and in a subset of sublateral interneurons and the PDA neuron in the tail. Expressed in cholinergic SIA neurons. Also expressed in the male tail. In males, expressed in the dorsal spicule protractor, ventral spicule protractor, dorsal spicule retractor and ventral spicule retractor muscles and the sensory post-cloacal sensilla B (PCB) neuron. In males, expressed in the sensory hook neurons HOA.

It localises to the cell membrane. Its function is as follows. G-protein coupled receptor which binds to the neurotransmitter dopamine with high affinity leading to the activation of an associated G-protein and downstream signaling pathways. Couples to G-proteins to inhibit adenylate cyclase (AC) activity and cAMP production. Inhibits synaptic vesicle fusion to negatively regulate the release of dopamine at dopaminergic neuron synapses. Antagonizes octopamine signaling in response to food by promoting the dopamine-mediated suppression of crh-1/CREB1 transcription factor activation in cholinergic SIA neurons. This is most likely in association with the G(o)-alpha G-protein subunit goa-1. In association with the G-alpha protein gpa-14, modulates two types of learning behavior: touch habituation and chemosensory associative conditioning. May act partly via tsp-17 to negatively regulate dopamine reuptake transporter dat-1 activity. Plays a role in behavioral plasticity and regulates the decision-making process when conflicting alternatives are present. Promotes male mating behavior by antagonizing acetylcholine signaling to control the protrusions of copulatory spicules from the tail of males during hermaphrodite vulval location. Modulates unc-7 activity at gap junctions to promote inhibitory neuronal signaling transduction between chemosensory and mechanosensory neurons, and thus ensures spicule insertion attempts are confined to the hermaphrodite vulva during copulation. Functionally, G-protein coupled receptor which binds to the neurotransmitter dopamine with high affinity leading to the activation of an associated G-protein and downstream signaling pathways. Couples to G-proteins to inhibit adenylate cyclase (AC) activity and cAMP production. The chain is Dopamine receptor 2 from Caenorhabditis elegans.